An 82-amino-acid polypeptide reads, in one-letter code: UPF0291 protein LVIS_1359 (82 aa).

It belongs to the UPF0291 family.

The protein resides in the cytoplasm. The protein is UPF0291 protein LVIS_1359 of Levilactobacillus brevis (strain ATCC 367 / BCRC 12310 / CIP 105137 / JCM 1170 / LMG 11437 / NCIMB 947 / NCTC 947) (Lactobacillus brevis).